Consider the following 326-residue polypeptide: Pyruvate dehydrogenase E1 component subunit alpha (326 aa).

Heterodimer of an alpha and a beta chain. Thiamine diphosphate serves as cofactor.

It carries out the reaction N(6)-[(R)-lipoyl]-L-lysyl-[protein] + pyruvate + H(+) = N(6)-[(R)-S(8)-acetyldihydrolipoyl]-L-lysyl-[protein] + CO2. Its function is as follows. The pyruvate dehydrogenase complex catalyzes the overall conversion of pyruvate to acetyl-CoA and CO(2). It contains multiple copies of three enzymatic components: pyruvate dehydrogenase (E1), dihydrolipoamide acetyltransferase (E2) and lipoamide dehydrogenase (E3). This is Pyruvate dehydrogenase E1 component subunit alpha (pdhA) from Rickettsia bellii (strain RML369-C).